A 251-amino-acid chain; its full sequence is Tryptophan synthase alpha chain (251 aa).

Residues glutamate 36 and aspartate 47 each act as proton acceptor in the active site.

The protein belongs to the TrpA family. As to quaternary structure, tetramer of two alpha and two beta chains.

It carries out the reaction (1S,2R)-1-C-(indol-3-yl)glycerol 3-phosphate + L-serine = D-glyceraldehyde 3-phosphate + L-tryptophan + H2O. Its pathway is amino-acid biosynthesis; L-tryptophan biosynthesis; L-tryptophan from chorismate: step 5/5. Functionally, the alpha subunit is responsible for the aldol cleavage of indoleglycerol phosphate to indole and glyceraldehyde 3-phosphate. This Thermococcus kodakarensis (strain ATCC BAA-918 / JCM 12380 / KOD1) (Pyrococcus kodakaraensis (strain KOD1)) protein is Tryptophan synthase alpha chain.